The primary structure comprises 65 residues: SPbeta prophage-derived uncharacterized protein YorO (65 aa).

The sequence is that of SPbeta prophage-derived uncharacterized protein YorO (yorO) from Bacillus subtilis (strain 168).